A 463-amino-acid chain; its full sequence is Glutamate--tRNA ligase (463 aa).

Positions proline 8–glycine 18 match the 'HIGH' region motif. The short motif at arginine 236–arginine 240 is the 'KMSKS' region element. Lysine 239 contacts ATP.

Belongs to the class-I aminoacyl-tRNA synthetase family. Glutamate--tRNA ligase type 1 subfamily. In terms of assembly, monomer.

It is found in the cytoplasm. The catalysed reaction is tRNA(Glu) + L-glutamate + ATP = L-glutamyl-tRNA(Glu) + AMP + diphosphate. Its function is as follows. Catalyzes the attachment of glutamate to tRNA(Glu) in a two-step reaction: glutamate is first activated by ATP to form Glu-AMP and then transferred to the acceptor end of tRNA(Glu). The chain is Glutamate--tRNA ligase from Nitrosomonas eutropha (strain DSM 101675 / C91 / Nm57).